The sequence spans 207 residues: 2,3-bisphosphoglycerate-dependent phosphoglycerate mutase (207 aa).

Residues 10-17 (RHGQSEWN), 23-24 (TG), R62, 89-92 (ERDY), K100, 116-117 (RR), and 160-161 (GN) each bind substrate. H11 serves as the catalytic Tele-phosphohistidine intermediate. The active-site Proton donor/acceptor is E89.

This sequence belongs to the phosphoglycerate mutase family. BPG-dependent PGAM subfamily. As to quaternary structure, homodimer.

It carries out the reaction (2R)-2-phosphoglycerate = (2R)-3-phosphoglycerate. It participates in carbohydrate degradation; glycolysis; pyruvate from D-glyceraldehyde 3-phosphate: step 3/5. Its function is as follows. Catalyzes the interconversion of 2-phosphoglycerate and 3-phosphoglycerate. In Bradyrhizobium sp. (strain ORS 278), this protein is 2,3-bisphosphoglycerate-dependent phosphoglycerate mutase.